The primary structure comprises 316 residues: MVEIKDSSNVRKLKEEFLRDFKRFDTVEDFSDHHYAAEGSPAKLSLWHLKFKGRPKNWVKDIQKEWKILDKNLPETIFVRACESRIDLLRAVIIGAEGTPYHDGLFFFDIQFPDTYPSVPPKVHYHSGGLRINPNLYKCGKVCLSLISTWTGKKREKWLPKESTMLQLLVSIQALILNEKPYYNEPGYEKSMGTPLGESYSKDYSENVFVFSLKTMHFEEFVRSHFFVRSHDIVKACNAYKDGAPVGSIDKGGVKKQTRQRGSLKFRINVTSFMKTVVDEFVNLGAIREANHRGEPNPTLFSCFFFCYLELIICSV.

One can recognise a UBC core domain in the interval 57–217 (NWVKDIQKEW…VFVFSLKTMH (161 aa)). Cysteine 143 serves as the catalytic Glycyl thioester intermediate.

Belongs to the ubiquitin-conjugating enzyme family.

The catalysed reaction is S-ubiquitinyl-[E1 ubiquitin-activating enzyme]-L-cysteine + [E2 ubiquitin-conjugating enzyme]-L-cysteine = [E1 ubiquitin-activating enzyme]-L-cysteine + S-ubiquitinyl-[E2 ubiquitin-conjugating enzyme]-L-cysteine.. Its pathway is protein modification; protein ubiquitination. In terms of biological role, accepts the ubiquitin from the E1 complex and catalyzes its covalent attachment to other proteins. In Arabidopsis thaliana (Mouse-ear cress), this protein is Putative ubiquitin-conjugating enzyme E2 39 (UBC39).